The primary structure comprises 258 residues: tRNA pseudouridine synthase A (258 aa).

The active-site Nucleophile is the Asp54. Substrate is bound at residue Tyr112.

Belongs to the tRNA pseudouridine synthase TruA family. Homodimer.

It catalyses the reaction uridine(38/39/40) in tRNA = pseudouridine(38/39/40) in tRNA. Its function is as follows. Formation of pseudouridine at positions 38, 39 and 40 in the anticodon stem and loop of transfer RNAs. This is tRNA pseudouridine synthase A from Geobacillus kaustophilus (strain HTA426).